Reading from the N-terminus, the 283-residue chain is Bifunctional protein FolD (283 aa).

Residues 166–168 (GAS) and Ile-232 contribute to the NADP(+) site.

It belongs to the tetrahydrofolate dehydrogenase/cyclohydrolase family. In terms of assembly, homodimer.

It carries out the reaction (6R)-5,10-methylene-5,6,7,8-tetrahydrofolate + NADP(+) = (6R)-5,10-methenyltetrahydrofolate + NADPH. The enzyme catalyses (6R)-5,10-methenyltetrahydrofolate + H2O = (6R)-10-formyltetrahydrofolate + H(+). Its pathway is one-carbon metabolism; tetrahydrofolate interconversion. Functionally, catalyzes the oxidation of 5,10-methylenetetrahydrofolate to 5,10-methenyltetrahydrofolate and then the hydrolysis of 5,10-methenyltetrahydrofolate to 10-formyltetrahydrofolate. The sequence is that of Bifunctional protein FolD from Wigglesworthia glossinidia brevipalpis.